The sequence spans 448 residues: Zinc finger and BTB domain-containing protein 14 (448 aa).

The BTB domain occupies 36–102 (CDIAIVVEDV…MYTAKISVKK (67 aa)). Residues 50–66 (HRCVLAACSTYFKKLFK) carry the Nuclear localization signal motif. A disordered region spans residues 130–193 (VSSPEENTQS…QEDGKSPTTT (64 aa)). Over residues 156–167 (DTQDDEVEEIGD) the composition is skewed to acidic residues. C2H2-type zinc fingers lie at residues 275-302 (IVCQ…ADRP), 303-330 (FVCE…GYKP), 331-358 (YSCE…NERP), 359-386 (FACH…GEKP), and 387-415 (FVCG…ERKQ). The segment covering 404–415 (RHENNMHSERKQ) has biased composition (basic and acidic residues). The segment at 404 to 425 (RHENNMHSERKQVTTANSIQSE) is disordered. A compositionally biased stretch (polar residues) spans 416–425 (VTTANSIQSE).

The protein belongs to the krueppel C2H2-type zinc-finger protein family. In terms of assembly, interacts with ZBTB21.

The protein resides in the nucleus. In terms of biological role, transcriptional activator of the dopamine transporter (DAT), binding it's promoter at the consensus sequence 5'-CCTGCACAGTTCACGGA-3'. Binds to 5'-d(GCC)(n)-3' trinucleotide repeats in promoter regions and acts as a repressor of the FMR1 gene. Transcriptional repressor of MYC and thymidine kinase promoters. In Gallus gallus (Chicken), this protein is Zinc finger and BTB domain-containing protein 14 (ZBTB14).